A 143-amino-acid chain; its full sequence is Anti-sigma F factor (143 aa).

This sequence belongs to the anti-sigma-factor family.

It carries out the reaction L-seryl-[protein] + ATP = O-phospho-L-seryl-[protein] + ADP + H(+). The catalysed reaction is L-threonyl-[protein] + ATP = O-phospho-L-threonyl-[protein] + ADP + H(+). Functionally, binds to sigma F and blocks its ability to form an RNA polymerase holoenzyme (E-sigma F). Phosphorylates SpoIIAA on a serine residue. This phosphorylation may enable SpoIIAA to act as an anti-anti-sigma factor that counteracts SpoIIAB and thus releases sigma F from inhibition. The protein is Anti-sigma F factor of Clostridium novyi (strain NT).